The sequence spans 216 residues: Thiosulfate dehydrogenase electron acceptor (216 aa).

Positions 1-22 (MKSIHWPLAGVAALLLSMQAQA) are cleaved as a signal peptide. Cytochrome c domains lie at 23-108 (ADGQ…EAMP) and 118-210 (SEAA…ANVG). C41, C44, H45, C141, C144, and H145 together coordinate heme c.

In terms of processing, binds 2 heme c groups covalently per subunit.

Functionally, acts as an electron acceptor for the thiosulfate dehydrogenase TsdA. This is Thiosulfate dehydrogenase electron acceptor (tsdB) from Stutzerimonas stutzeri (strain A1501) (Pseudomonas stutzeri).